The chain runs to 361 residues: MLNINIEKQFSQLQLKVNTQLPLQGVTAVFGRSGAGKTSLVNLLGGLTTPDKGEISLGDTLLFKHKTVNLPPEKRRIGYVFQEARLFPHYSVKGNLTYGMRHKTPELFDKVVSLLGIEKLLSRYPSTLSGGEKQRVAIGRALLTSPQMLLMDEPLASLDLPRKRELLPYLQTLAQELKLPIVYVSHSLDEILQLADHMLVLHQGKMISQGPLTQVWNSEQMRPWVPLQELSSLLSARIADRHPDYPMTRLLMDDGNQLWVSGQLPPTHKQLKVRIQANHVSVCTEEPKGSSIRNLLRGKIKELYPSDNGEQIQLKIALGKDELWANITPWARDELQLIPGKAIYAQIKGVTMTQMDIAESH.

Residues 1–228 (MLNINIEKQF…EQMRPWVPLQ (228 aa)) form the ABC transporter domain. 31 to 38 (GRSGAGKT) is an ATP binding site. Residues 289-356 (GSSIRNLLRG…IKGVTMTQMD (68 aa)) enclose the Mop domain.

This sequence belongs to the ABC transporter superfamily. Molybdate importer (TC 3.A.1.8) family. The complex is composed of two ATP-binding proteins (ModC), two transmembrane proteins (ModB) and a solute-binding protein (ModA).

It is found in the cell inner membrane. It catalyses the reaction molybdate(out) + ATP + H2O = molybdate(in) + ADP + phosphate + H(+). Part of the ABC transporter complex ModABC involved in molybdenum import. Responsible for energy coupling to the transport system. In Shewanella sp. (strain MR-4), this protein is Molybdenum import ATP-binding protein ModC.